We begin with the raw amino-acid sequence, 275 residues long: Large ribosomal subunit protein uL2c (275 aa).

2 disordered regions span residues 36–56 (KNHR…HRGK) and 224–275 (VMNP…RKRK). Residues 255 to 275 (LGRKTRKKPKYSNRYILRKRK) are compositionally biased toward basic residues.

Belongs to the universal ribosomal protein uL2 family. Part of the 50S ribosomal subunit.

The protein resides in the plastid. The protein localises to the chloroplast. The polypeptide is Large ribosomal subunit protein uL2c (rpl2) (Gracilaria tenuistipitata var. liui (Red alga)).